A 533-amino-acid chain; its full sequence is MSNLKWRALLVVVVLIVGVVYLVPTFVSTLPPGWSKFLPKDKIRLGLDLQGGMHLILEVEADQAVSNTATRLAEDLKDAFRKEKIAFNKIDKTGKWDIEVQLPGTEQQSQIGPLVEKEFPTLKWVSAETQPEGTVKVMLTVHEKEVERVQKAAIAQGLETIRNRIDQFGVSEPDIRPQGEDRILVQLPGIQDPQRAVELIGKTAQLEFKLVAEGVSPQDVKSGKAPAGTKIYPMKHTDRTTRQRTESQIVLNDRTLMSGEYITNAQVEIDRQHSSSYVALDFDAQGAKLFEKITEANVKKQLAIVLDGVVYSAPVIQETIGGGKATITGSFTDQEARDLAIVLRAGALPAPVKILEQRTVGPSLGADSINKGVLASIVGGIGTILFMLIYYRFGGVVADLALALNVLLVLAGMAAFGFTLTLPGIAGIALTIGMAVDANVLIYERIREELRLGKTPRAALETGYDRATLTILDANVTTIIAALVLLQFGTGPVRGFAVTLTVGLAANMFTAIFVTRVIFDYLLVQRRIKTLSI.

6 helical membrane-spanning segments follow: residues alanine 8–serine 28, isoleucine 377–valine 397, leucine 400–leucine 420, leucine 422–isoleucine 442, leucine 469–glycine 489, and glycine 495–threonine 515.

The protein belongs to the SecD/SecF family. SecD subfamily. As to quaternary structure, forms a complex with SecF. Part of the essential Sec protein translocation apparatus which comprises SecA, SecYEG and auxiliary proteins SecDF-YajC and YidC.

The protein localises to the cell inner membrane. In terms of biological role, part of the Sec protein translocase complex. Interacts with the SecYEG preprotein conducting channel. SecDF uses the proton motive force (PMF) to complete protein translocation after the ATP-dependent function of SecA. This Syntrophobacter fumaroxidans (strain DSM 10017 / MPOB) protein is Protein translocase subunit SecD.